The sequence spans 407 residues: SERPINE1 mRNA-binding protein 1 (407 aa).

The residue at position 25 (Ser25) is a Phosphoserine. The segment at 33–227 is disordered; that stretch reads AAENKKKEAG…GSGSHNWGTV (195 aa). The segment covering 51–68 has biased composition (low complexity); the sequence is AKSAAQAAAQTNSNAAGK. Lys52 is modified (N6-acetyllysine; alternate). Residue Lys52 forms a Glycyl lysine isopeptide (Lys-Gly) (interchain with G-Cter in SUMO1); alternate linkage. Lys68 is subject to N6-acetyllysine. Composition is skewed to basic and acidic residues over residues 70-80, 89-114, and 122-162; these read LRKESQKDRKN, VDKK…RRPD, and KIID…DRPI. Lys102 participates in a covalent cross-link: Glycyl lysine isopeptide (Lys-Gly) (interchain with G-Cter in SUMO1); alternate. Lys102 is covalently cross-linked (Glycyl lysine isopeptide (Lys-Gly) (interchain with G-Cter in SUMO2)). Lys102 participates in a covalent cross-link: Glycyl lysine isopeptide (Lys-Gly) (interchain with G-Cter in SUMO2); alternate. Lys122 and Lys140 each carry N6-acetyllysine. A compositionally biased stretch (gly residues) spans 164-182; that stretch reads GRGGLGRGRGGRGRGMGRG. An omega-N-methylarginine mark is found at Arg165 and Arg188. Positions 183 to 199 are enriched in basic and acidic residues; the sequence is DGFDSRGKREFDRHSGS. Residues Ser197, Ser199, Ser203, Ser205, and Ser208 each carry the phosphoserine modification. Residue Lys211 is modified to N6-acetyllysine; alternate. Lys211 participates in a covalent cross-link: Glycyl lysine isopeptide (Lys-Gly) (interchain with G-Cter in SUMO2); alternate. Arg216 carries the post-translational modification Omega-N-methylarginine. Ser221 carries the post-translational modification Phosphoserine. Thr226 is modified (phosphothreonine). Lys228 is covalently cross-linked (Glycyl lysine isopeptide (Lys-Gly) (interchain with G-Cter in SUMO1); alternate). Lys228 participates in a covalent cross-link: Glycyl lysine isopeptide (Lys-Gly) (interchain with G-Cter in SUMO2); alternate. A Phosphoserine modification is found at Ser234. Over residues 242 to 256 the composition is skewed to polar residues; sequence ISYNCSDLDQSNVTE. Disordered stretches follow at residues 242–291 and 327–407; these read ISYN…TLDE and SKSE…PALA. Residues 261–274 are compositionally biased toward basic and acidic residues; sequence GEEHPVADTENKEN. A Glycyl lysine isopeptide (Lys-Gly) (interchain with G-Cter in SUMO1); alternate cross-link involves residue Lys280. Residue Lys280 forms a Glycyl lysine isopeptide (Lys-Gly) (interchain with G-Cter in SUMO2) linkage. Residue Lys280 forms a Glycyl lysine isopeptide (Lys-Gly) (interchain with G-Cter in SUMO2); alternate linkage. Basic and acidic residues-rich tracts occupy residues 281-291 and 327-341; these read EEGPKEMTLDE and SKSE…VMDH. Lys328 is modified (N6-acetyllysine). Ser329 is modified (phosphoserine). Over residues 362–371 the composition is skewed to gly residues; the sequence is GRPGRGGRGG. 3 positions are modified to omega-N-methylarginine: Arg363, Arg366, and Arg369. 2 positions are modified to phosphoserine: Ser391 and Ser393.

It belongs to the SERBP1-HABP4 family. Associates with mature 80S ribosomes. Interacts with EEF2/eEF2; interaction sequesters EEF2/eEF2 at the A-site of the ribosome, thereby blocking the interaction sites of the mRNA-tRNA complex, promoting ribosome stabilization and hibernation. Interacts with SPIN1. Interacts with CHD3 and TDRD3. Interacts with ZDHHC17 (via ANK repeats). Phosphorylation by MTOR inhibits SERBP1 and relieves ribosome hibernation.

Ribosome-binding protein that promotes ribosome hibernation, a process during which ribosomes are stabilized in an inactive state and preserved from proteasomal degradation. Acts via its association with EEF2/eEF2 factor, sequestering EEF2/eEF2 at the A-site of the ribosome and promoting ribosome stabilization and storage in an inactive state. May also play a role in the regulation of mRNA stability: binds to the 3'-most 134 nt of the SERPINE1/PAI1 mRNA, a region which confers cyclic nucleotide regulation of message decay. Seems to play a role in PML-nuclear bodies formation. The chain is SERPINE1 mRNA-binding protein 1 from Oryctolagus cuniculus (Rabbit).